The chain runs to 703 residues: Polyribonucleotide nucleotidyltransferase (703 aa).

The Mg(2+) site is built by Asp-486 and Asp-492. A KH domain is found at 554–613 (PKIITTNIDPEKIRDVIGPGGKMINKIIAETGVKIDIEEDGRVYILTPDSAAAQKALKII). The region spanning 623–691 (GEVYLGKVVR…KQGRINLSRK (69 aa)) is the S1 motif domain.

It belongs to the polyribonucleotide nucleotidyltransferase family. It depends on Mg(2+) as a cofactor.

The protein resides in the cytoplasm. The enzyme catalyses RNA(n+1) + phosphate = RNA(n) + a ribonucleoside 5'-diphosphate. Functionally, involved in mRNA degradation. Catalyzes the phosphorolysis of single-stranded polyribonucleotides processively in the 3'- to 5'-direction. The sequence is that of Polyribonucleotide nucleotidyltransferase from Ruminiclostridium cellulolyticum (strain ATCC 35319 / DSM 5812 / JCM 6584 / H10) (Clostridium cellulolyticum).